The primary structure comprises 296 residues: 4-hydroxy-tetrahydrodipicolinate synthase (296 aa).

Residue Thr45 coordinates pyruvate. Residue Tyr133 is the Proton donor/acceptor of the active site. The active-site Schiff-base intermediate with substrate is the Lys161. Ile203 is a binding site for pyruvate.

Belongs to the DapA family. In terms of assembly, homotetramer; dimer of dimers.

It localises to the cytoplasm. It catalyses the reaction L-aspartate 4-semialdehyde + pyruvate = (2S,4S)-4-hydroxy-2,3,4,5-tetrahydrodipicolinate + H2O + H(+). The protein operates within amino-acid biosynthesis; L-lysine biosynthesis via DAP pathway; (S)-tetrahydrodipicolinate from L-aspartate: step 3/4. Its function is as follows. Catalyzes the condensation of (S)-aspartate-beta-semialdehyde [(S)-ASA] and pyruvate to 4-hydroxy-tetrahydrodipicolinate (HTPA). The polypeptide is 4-hydroxy-tetrahydrodipicolinate synthase (Idiomarina loihiensis (strain ATCC BAA-735 / DSM 15497 / L2-TR)).